The primary structure comprises 318 residues: Aspartate carbamoyltransferase catalytic subunit (318 aa).

Residues Arg58 and Thr59 each contribute to the carbamoyl phosphate site. Lys86 provides a ligand contact to L-aspartate. 3 residues coordinate carbamoyl phosphate: Arg108, His141, and Gln144. L-aspartate-binding residues include Arg174 and Arg226. 2 residues coordinate carbamoyl phosphate: Gly270 and Pro271.

It belongs to the aspartate/ornithine carbamoyltransferase superfamily. ATCase family. As to quaternary structure, heterododecamer (2C3:3R2) of six catalytic PyrB chains organized as two trimers (C3), and six regulatory PyrI chains organized as three dimers (R2).

The catalysed reaction is carbamoyl phosphate + L-aspartate = N-carbamoyl-L-aspartate + phosphate + H(+). It participates in pyrimidine metabolism; UMP biosynthesis via de novo pathway; (S)-dihydroorotate from bicarbonate: step 2/3. Catalyzes the condensation of carbamoyl phosphate and aspartate to form carbamoyl aspartate and inorganic phosphate, the committed step in the de novo pyrimidine nucleotide biosynthesis pathway. This chain is Aspartate carbamoyltransferase catalytic subunit, found in Lactobacillus delbrueckii subsp. bulgaricus (strain ATCC BAA-365 / Lb-18).